A 477-amino-acid chain; its full sequence is Glutamyl-tRNA(Gln) amidotransferase subunit A (477 aa).

Catalysis depends on charge relay system residues Lys-76 and Ser-151. Catalysis depends on Ser-175, which acts as the Acyl-ester intermediate.

The protein belongs to the amidase family. GatA subfamily. In terms of assembly, heterotrimer of A, B and C subunits.

The catalysed reaction is L-glutamyl-tRNA(Gln) + L-glutamine + ATP + H2O = L-glutaminyl-tRNA(Gln) + L-glutamate + ADP + phosphate + H(+). Allows the formation of correctly charged Gln-tRNA(Gln) through the transamidation of misacylated Glu-tRNA(Gln) in organisms which lack glutaminyl-tRNA synthetase. The reaction takes place in the presence of glutamine and ATP through an activated gamma-phospho-Glu-tRNA(Gln). The polypeptide is Glutamyl-tRNA(Gln) amidotransferase subunit A (Prosthecochloris aestuarii (strain DSM 271 / SK 413)).